Consider the following 199-residue polypeptide: ParB-like protein Saci_1498 (199 aa).

This sequence belongs to the ParB family.

Functionally, probably part of a 4-gene DNA damage response locus in which the upstream ups system, in combination with this downstream locus, functions in homologous recombination to rescue Sulfolobales from DNA-damaging threats. This protein might function in the DNA transfer machinery. This is ParB-like protein Saci_1498 from Sulfolobus acidocaldarius (strain ATCC 33909 / DSM 639 / JCM 8929 / NBRC 15157 / NCIMB 11770).